We begin with the raw amino-acid sequence, 188 residues long: Methylated-DNA--protein-cysteine methyltransferase (188 aa).

Residues tyrosine 120, glycine 121, and arginine 134 each contribute to the DNA site. Cysteine 151 acts as the Nucleophile; methyl group acceptor in catalysis. Serine 157 serves as a coordination point for DNA.

Belongs to the MGMT family.

It is found in the nucleus. The enzyme catalyses a 6-O-methyl-2'-deoxyguanosine in DNA + L-cysteinyl-[protein] = S-methyl-L-cysteinyl-[protein] + a 2'-deoxyguanosine in DNA. It carries out the reaction a 4-O-methyl-thymidine in DNA + L-cysteinyl-[protein] = a thymidine in DNA + S-methyl-L-cysteinyl-[protein]. In terms of biological role, involved in the cellular defense against the biological effects of O6-methylguanine (O6-MeG) and O4-methylthymine (O4-MeT) in DNA. Repairs the methylated nucleobase in DNA by stoichiometrically transferring the methyl group to a cysteine residue in the enzyme. This is a suicide reaction: the enzyme is irreversibly inactivated. Prefers double-stranded DNA over single-stranded DNA as substrate. In Saccharomyces cerevisiae (strain YJM789) (Baker's yeast), this protein is Methylated-DNA--protein-cysteine methyltransferase (MGT1).